The sequence spans 508 residues: Histidine ammonia-lyase (508 aa).

A cross-link (5-imidazolinone (Ala-Gly)) is located at residues 143-145 (ASG). Ser-144 carries the post-translational modification 2,3-didehydroalanine (Ser).

The protein belongs to the PAL/histidase family. Contains an active site 4-methylidene-imidazol-5-one (MIO), which is formed autocatalytically by cyclization and dehydration of residues Ala-Ser-Gly.

Its subcellular location is the cytoplasm. The catalysed reaction is L-histidine = trans-urocanate + NH4(+). It functions in the pathway amino-acid degradation; L-histidine degradation into L-glutamate; N-formimidoyl-L-glutamate from L-histidine: step 1/3. The chain is Histidine ammonia-lyase from Anaeromyxobacter dehalogenans (strain 2CP-C).